The chain runs to 131 residues: Small ribosomal subunit protein bS6 (131 aa).

A disordered region spans residues 97 to 131 (TEASPMAKARDERDSRRGPAGERSYDEAHAEEIAE). Residues 104 to 131 (KARDERDSRRGPAGERSYDEAHAEEIAE) show a composition bias toward basic and acidic residues.

This sequence belongs to the bacterial ribosomal protein bS6 family.

In terms of biological role, binds together with bS18 to 16S ribosomal RNA. The chain is Small ribosomal subunit protein bS6 from Shewanella baltica (strain OS223).